We begin with the raw amino-acid sequence, 236 residues long: ATP synthase subunit a (236 aa).

The next 5 membrane-spanning stretches (helical) occupy residues 18–38 (STVM…FIST), 79–99 (GITL…FSIV), 112–132 (DPTV…FYGV), 174–194 (IYAG…GAVG), and 205–227 (WQGF…TMVY).

The protein belongs to the ATPase A chain family. F-type ATPases have 2 components, CF(1) - the catalytic core - and CF(0) - the membrane proton channel. CF(1) has five subunits: alpha(3), beta(3), gamma(1), delta(1), epsilon(1). CF(0) has three main subunits: a(1), b(2) and c(9-12). The alpha and beta chains form an alternating ring which encloses part of the gamma chain. CF(1) is attached to CF(0) by a central stalk formed by the gamma and epsilon chains, while a peripheral stalk is formed by the delta and b chains.

It is found in the cell membrane. Functionally, key component of the proton channel; it plays a direct role in the translocation of protons across the membrane. The protein is ATP synthase subunit a of Lysinibacillus sphaericus (strain C3-41).